A 135-amino-acid chain; its full sequence is Immunity protein RhsIA (135 aa).

A disordered region spans residues 58–77 (RKQGRQISLSCGEPPEYSPD).

In terms of biological role, immunity component of a toxin-immunity protein module, which functions as a cellular contact-dependent growth inhibition (CDI) system. Specifically inhibits its cognate toxin RhsA. Cell contact is necessary for growth inhibition. This Dickeya dadantii (strain 3937) (Erwinia chrysanthemi (strain 3937)) protein is Immunity protein RhsIA (rhsIA).